Reading from the N-terminus, the 902-residue chain is Translation initiation factor IF-2 (902 aa).

Composition is skewed to basic and acidic residues over residues 1–12 (MVDTKTPGDKKL) and 43–60 (VVEKRGKRRIGDGPEPHA). The interval 1-276 (MVDTKTPGDK…KPGPQKERGR (276 aa)) is disordered. Residues 69-84 (PAAPAPSRPAPPPAPP) show a composition bias toward pro residues. The span at 111-174 (AKLREVEERR…ETEAKKRFGE (64 aa)) shows a compositional bias: basic and acidic residues. 2 stretches are compositionally biased toward low complexity: residues 181-190 (AARPATAAPA) and 198-237 (APAARPGTTTTRPGTTTARPATTTAQRPGAPAGRGPAVAA). The 170-residue stretch at 398–567 (TRSPVVTVMG…MIALQADILD (170 aa)) folds into the tr-type G domain. The interval 407–414 (GHVDHGKT) is G1. Residue 407–414 (GHVDHGKT) coordinates GTP. The segment at 432–436 (GITQH) is G2. The interval 455 to 458 (DTPG) is G3. Residues 455 to 459 (DTPGH) and 509 to 512 (NKID) each bind GTP. The tract at residues 509 to 512 (NKID) is G4. The segment at 545-547 (SAK) is G5.

The protein belongs to the TRAFAC class translation factor GTPase superfamily. Classic translation factor GTPase family. IF-2 subfamily.

The protein resides in the cytoplasm. One of the essential components for the initiation of protein synthesis. Protects formylmethionyl-tRNA from spontaneous hydrolysis and promotes its binding to the 30S ribosomal subunits. Also involved in the hydrolysis of GTP during the formation of the 70S ribosomal complex. This is Translation initiation factor IF-2 from Bradyrhizobium diazoefficiens (strain JCM 10833 / BCRC 13528 / IAM 13628 / NBRC 14792 / USDA 110).